The following is a 113-amino-acid chain: UPF0342 protein MGAS10750_Spy0713 (113 aa).

The protein belongs to the UPF0342 family.

In Streptococcus pyogenes serotype M4 (strain MGAS10750), this protein is UPF0342 protein MGAS10750_Spy0713.